The following is a 144-amino-acid chain: Nucleoside diphosphate kinase (144 aa).

ATP contacts are provided by Lys-11, Phe-59, Arg-87, Thr-93, Arg-104, and Asn-114. His-117 functions as the Pros-phosphohistidine intermediate in the catalytic mechanism.

It belongs to the NDK family. As to quaternary structure, homotetramer. It depends on Mg(2+) as a cofactor.

It is found in the cytoplasm. The enzyme catalyses a 2'-deoxyribonucleoside 5'-diphosphate + ATP = a 2'-deoxyribonucleoside 5'-triphosphate + ADP. It carries out the reaction a ribonucleoside 5'-diphosphate + ATP = a ribonucleoside 5'-triphosphate + ADP. In terms of biological role, major role in the synthesis of nucleoside triphosphates other than ATP. The ATP gamma phosphate is transferred to the NDP beta phosphate via a ping-pong mechanism, using a phosphorylated active-site intermediate. The polypeptide is Nucleoside diphosphate kinase (Coxiella burnetii (strain CbuG_Q212) (Coxiella burnetii (strain Q212))).